The chain runs to 499 residues: Thioredoxin reductase 1, cytoplasmic (499 aa).

Residues 22–23 (SG), 42–43 (DF), 58–59 (TC), and 63–67 (SCIPK) contribute to the FAD site. A disulfide bridge links cysteine 59 with cysteine 64. An N6-succinyllysine modification is found at lysine 68. Tyrosine 131 carries the phosphotyrosine modification. FAD contacts are provided by residues 131–132 (YG) and threonine 161. NADP(+) is bound by residues arginine 166, 198–204 (ASYVALE), 221–222 (RS), arginine 226, 226–228 (RGF), 292–293 (GR), and lysine 315. Tyrosine 200 provides a ligand contact to FAD. FAD contacts are provided by residues aspartate 334, 341 to 343 (ELT), and histidine 472. Glutamate 341 serves as a coordination point for NADP(+). The active-site Proton acceptor is histidine 472. Residues 497–498 (CU) constitute a cross-link (cysteinyl-selenocysteine (Cys-Sec)). Selenocysteine 498 is a non-standard amino acid (selenocysteine).

The protein belongs to the class-I pyridine nucleotide-disulfide oxidoreductase family. As to quaternary structure, homodimer. Requires FAD as cofactor. In terms of processing, ISGylated.

It localises to the cytoplasm. It carries out the reaction [thioredoxin]-dithiol + NADP(+) = [thioredoxin]-disulfide + NADPH + H(+). It catalyses the reaction H2O2 + NADPH + H(+) = NADP(+) + 2 H2O. In terms of biological role, reduces disulfideprotein thioredoxin (Trx) to its dithiol-containing form. Homodimeric flavoprotein involved in the regulation of cellular redox reactions, growth and differentiation. Contains a selenocysteine residue at the C-terminal active site that is essential for catalysis. Also has reductase activity on hydrogen peroxide (H2O2). This Sus scrofa (Pig) protein is Thioredoxin reductase 1, cytoplasmic (TXNRD1).